The primary structure comprises 701 residues: Elongation factor G (701 aa).

The 284-residue stretch at serine 8–threonine 291 folds into the tr-type G domain. GTP contacts are provided by residues alanine 17–threonine 24, aspartate 89–histidine 93, and asparagine 143–aspartate 146.

It belongs to the TRAFAC class translation factor GTPase superfamily. Classic translation factor GTPase family. EF-G/EF-2 subfamily.

Its subcellular location is the cytoplasm. Functionally, catalyzes the GTP-dependent ribosomal translocation step during translation elongation. During this step, the ribosome changes from the pre-translocational (PRE) to the post-translocational (POST) state as the newly formed A-site-bound peptidyl-tRNA and P-site-bound deacylated tRNA move to the P and E sites, respectively. Catalyzes the coordinated movement of the two tRNA molecules, the mRNA and conformational changes in the ribosome. The sequence is that of Elongation factor G from Pseudomonas fluorescens (strain Pf0-1).